Here is a 321-residue protein sequence, read N- to C-terminus: Transaldolase (321 aa).

K132 functions as the Schiff-base intermediate with substrate in the catalytic mechanism.

Belongs to the transaldolase family. Type 1 subfamily. In terms of assembly, homodimer.

The protein resides in the cytoplasm. It catalyses the reaction D-sedoheptulose 7-phosphate + D-glyceraldehyde 3-phosphate = D-erythrose 4-phosphate + beta-D-fructose 6-phosphate. It participates in carbohydrate degradation; pentose phosphate pathway; D-glyceraldehyde 3-phosphate and beta-D-fructose 6-phosphate from D-ribose 5-phosphate and D-xylulose 5-phosphate (non-oxidative stage): step 2/3. Transaldolase is important for the balance of metabolites in the pentose-phosphate pathway. This is Transaldolase from Rhizobium leguminosarum bv. trifolii (strain WSM2304).